The primary structure comprises 311 residues: Reaction center protein L chain (311 aa).

Transmembrane regions (helical) follow at residues 68–90 (FWGFVSVIGIIFGSYFYINETIL), 123–151 (GFAWQMTVLFATIAFFGWMMRQVDISMKL), and 156–178 (HVPIAFGVAFSAWLVLQVIRPIA). His183 and His213 together coordinate (7R,8Z)-bacteriochlorophyll b. The chain crosses the membrane as a helical span at residues 211 to 238 (PFHAIGITGLFASTWLLACHGSLILSAA). Fe cation is bound at residue His230. Phe253 lines the a ubiquinone pocket. The chain crosses the membrane as a helical span at residues 262–287 (GESGVHRLGYIFAIGGILSADLCILL). His267 is a binding site for Fe cation.

It belongs to the reaction center PufL/M/PsbA/D family. Reaction center is composed of four bacteriochlorophylls, two bacteriopheophytins, two ubiquinones, one iron, and two highly hydrophobic polypeptide chains (designated L and M).

It localises to the cell membrane. Its function is as follows. The reaction center is a membrane-bound complex that mediates the initial photochemical event in the electron transfer process of photosynthesis. This Chloroflexus aurantiacus (strain ATCC 29366 / DSM 635 / J-10-fl) protein is Reaction center protein L chain (pufL).